A 98-amino-acid polypeptide reads, in one-letter code: NADH-ubiquinone oxidoreductase chain 4L (98 aa).

3 helical membrane passes run 1 to 21 (MSMV…GLLM), 29 to 49 (SLLC…MTIL), and 61 to 81 (IILL…LVMV).

It belongs to the complex I subunit 4L family. As to quaternary structure, core subunit of respiratory chain NADH dehydrogenase (Complex I) which is composed of 45 different subunits.

It is found in the mitochondrion inner membrane. It carries out the reaction a ubiquinone + NADH + 5 H(+)(in) = a ubiquinol + NAD(+) + 4 H(+)(out). Its function is as follows. Core subunit of the mitochondrial membrane respiratory chain NADH dehydrogenase (Complex I) which catalyzes electron transfer from NADH through the respiratory chain, using ubiquinone as an electron acceptor. Part of the enzyme membrane arm which is embedded in the lipid bilayer and involved in proton translocation. This is NADH-ubiquinone oxidoreductase chain 4L (MT-ND4L) from Phocarctos hookeri (Hooker's sea lion).